Consider the following 562-residue polypeptide: NAD-dependent malic enzyme (562 aa).

The active-site Proton donor is the Y101. R154 serves as a coordination point for NAD(+). Catalysis depends on K172, which acts as the Proton acceptor. The a divalent metal cation site is built by E243, D244, and D267. Residues D267 and N415 each coordinate NAD(+).

It belongs to the malic enzymes family. Homotetramer. The cofactor is Mg(2+). Mn(2+) serves as cofactor.

It carries out the reaction (S)-malate + NAD(+) = pyruvate + CO2 + NADH. The catalysed reaction is oxaloacetate + H(+) = pyruvate + CO2. This is NAD-dependent malic enzyme from Shewanella woodyi (strain ATCC 51908 / MS32).